The sequence spans 43 residues: Protein PsbN (43 aa).

Residues 5–27 traverse the membrane as a helical segment; it reads NLVTISISCLLVSLTGYAIYTSF.

Belongs to the PsbN family.

It localises to the plastid. It is found in the chloroplast thylakoid membrane. In terms of biological role, may play a role in photosystem I and II biogenesis. This Gnetum gnemon (Spanish joint-fir) protein is Protein PsbN.